Consider the following 364-residue polypeptide: MSQQAVKFAYWVPNVSGGLVVSRIEQRTDWGIDYNRKLAQLAEAAGFEYALTQIRFTAGYGAEFQHESVAFSHALLAATSQLKVIAAILPGPWQPALAAKQLATIDQLTNGRIAVNIVSGWFRGEFQAIGEHWLEHDERYRRSEEFIRSLRGIWSQDNFTFRGDFYRFDNYSLKPKPLGRPEIFQGGSSRAARDMAARVSDWYFTNGNSVEGIKAQVDDIRAKAAANHHSVKIGVNAFVIARDTEEEAKAVLAQIIDQADPEAVNAFGDAAKQAGRASPEGEGNWAKSTFEDLVQYNDGFKTNLIGTPQQIAERIVALKAVGVDLVLAGFLHFQEEVEYFGQRVLPLVRELEAKAQSARTAEVA.

Belongs to the SsuD family.

The enzyme catalyses dimethyl sulfone + FMNH2 + O2 = methanesulfinate + FMN + formaldehyde + H2O + 2 H(+). Functionally, involved in the dimethyl sulfide degradation pathway. Catalyzes the oxidation of dimethylsulfone (DMSO2) to yield methanesulfinate, which is oxidized spontaneously to methanesulfonate in the presence of dioxygen and FMNH(2). The sequence is that of FMNH(2)-dependent dimethylsulfone monooxygenase from Pseudomonas fluorescens (strain Pf0-1).